Consider the following 67-residue polypeptide: Small ribosomal subunit protein eS27 (67 aa).

Zn(2+)-binding residues include C22, C25, C41, and C44. The segment at 22-44 (CPDCGNEQVTFSHAAMVVRCLVC) adopts a C4-type zinc-finger fold.

The protein belongs to the eukaryotic ribosomal protein eS27 family. As to quaternary structure, part of the 30S ribosomal subunit. The cofactor is Zn(2+).

In Pyrobaculum neutrophilum (strain DSM 2338 / JCM 9278 / NBRC 100436 / V24Sta) (Thermoproteus neutrophilus), this protein is Small ribosomal subunit protein eS27.